Consider the following 151-residue polypeptide: UPF0735 ACT domain-containing protein SERP1207 (151 aa).

Residues Thr74–Met149 enclose the ACT domain.

Belongs to the UPF0735 family.

The sequence is that of UPF0735 ACT domain-containing protein SERP1207 from Staphylococcus epidermidis (strain ATCC 35984 / DSM 28319 / BCRC 17069 / CCUG 31568 / BM 3577 / RP62A).